The chain runs to 309 residues: Protein FdhE (309 aa).

This sequence belongs to the FdhE family.

It localises to the cytoplasm. Necessary for formate dehydrogenase activity. The polypeptide is Protein FdhE (Escherichia coli (strain SMS-3-5 / SECEC)).